Here is a 313-residue protein sequence, read N- to C-terminus: Aspartate carbamoyltransferase catalytic subunit (313 aa).

Positions 61 and 62 each coordinate carbamoyl phosphate. An L-aspartate-binding site is contributed by lysine 89. Arginine 111, histidine 139, and glutamine 142 together coordinate carbamoyl phosphate. Residues arginine 172 and arginine 227 each contribute to the L-aspartate site. Carbamoyl phosphate contacts are provided by glycine 268 and proline 269.

This sequence belongs to the aspartate/ornithine carbamoyltransferase superfamily. ATCase family. In terms of assembly, heterododecamer (2C3:3R2) of six catalytic PyrB chains organized as two trimers (C3), and six regulatory PyrI chains organized as three dimers (R2).

It carries out the reaction carbamoyl phosphate + L-aspartate = N-carbamoyl-L-aspartate + phosphate + H(+). It participates in pyrimidine metabolism; UMP biosynthesis via de novo pathway; (S)-dihydroorotate from bicarbonate: step 2/3. Catalyzes the condensation of carbamoyl phosphate and aspartate to form carbamoyl aspartate and inorganic phosphate, the committed step in the de novo pyrimidine nucleotide biosynthesis pathway. This chain is Aspartate carbamoyltransferase catalytic subunit, found in Gluconobacter oxydans (strain 621H) (Gluconobacter suboxydans).